Consider the following 606-residue polypeptide: 4-hydroxy-3-methylbut-2-en-1-yl diphosphate synthase (flavodoxin) (606 aa).

Residues C513, C516, C547, and E554 each coordinate [4Fe-4S] cluster.

The protein belongs to the IspG family. Requires [4Fe-4S] cluster as cofactor.

It catalyses the reaction (2E)-4-hydroxy-3-methylbut-2-enyl diphosphate + oxidized [flavodoxin] + H2O + 2 H(+) = 2-C-methyl-D-erythritol 2,4-cyclic diphosphate + reduced [flavodoxin]. Its pathway is isoprenoid biosynthesis; isopentenyl diphosphate biosynthesis via DXP pathway; isopentenyl diphosphate from 1-deoxy-D-xylulose 5-phosphate: step 5/6. Converts 2C-methyl-D-erythritol 2,4-cyclodiphosphate (ME-2,4cPP) into 1-hydroxy-2-methyl-2-(E)-butenyl 4-diphosphate. This chain is 4-hydroxy-3-methylbut-2-en-1-yl diphosphate synthase (flavodoxin), found in Chlamydia caviae (strain ATCC VR-813 / DSM 19441 / 03DC25 / GPIC) (Chlamydophila caviae).